An 835-amino-acid chain; its full sequence is Leucine--tRNA ligase (835 aa).

A 'HIGH' region motif is present at residues 44–54 (PYPSGNIHMGH). The short motif at 587–591 (KMSKS) is the 'KMSKS' region element. Position 590 (K590) interacts with ATP.

The protein belongs to the class-I aminoacyl-tRNA synthetase family.

The protein resides in the cytoplasm. The enzyme catalyses tRNA(Leu) + L-leucine + ATP = L-leucyl-tRNA(Leu) + AMP + diphosphate. The chain is Leucine--tRNA ligase from Lawsonia intracellularis (strain PHE/MN1-00).